The chain runs to 462 residues: Neuronal acetylcholine receptor subunit non-alpha-2 (462 aa).

The first 30 residues, 1–30 (MTLAVIGLFTLFTSIIAITPAREFVSLAER), serve as a signal peptide directing secretion. Topologically, residues 31 to 234 (EDALLRELFQ…ITYSFILKRL (204 aa)) are extracellular. N-linked (GlcNAc...) asparagine glycosylation is found at N53 and N168. C155 and C169 are disulfide-bonded. 3 helical membrane passes run 235-259 (PLFY…VFYL), 267-284 (VSLS…LLVI), and 301-322 (YLLF…VINV). Residues 323–428 (HHRSSATYHP…WKFVAQVLDR (106 aa)) lie on the Cytoplasmic side of the membrane. The span at 362-372 (ELEPHSPDLKP) shows a compositional bias: basic and acidic residues. The tract at residues 362–384 (ELEPHSPDLKPRNKKGPPGPEGE) is disordered. Residues 429-446 (IFLWTFLTVSVLGTILIF) form a helical membrane-spanning segment.

Belongs to the ligand-gated ion channel (TC 1.A.9) family. Acetylcholine receptor (TC 1.A.9.1) subfamily. As to quaternary structure, neuronal AChR seems to be composed of two different type of subunits: alpha and beta.

The protein localises to the postsynaptic cell membrane. Its subcellular location is the cell membrane. Its function is as follows. After binding acetylcholine, the AChR responds by an extensive change in conformation that affects all subunits and leads to opening of an ion-conducting channel across the plasma membrane. The chain is Neuronal acetylcholine receptor subunit non-alpha-2 from Carassius auratus (Goldfish).